Reading from the N-terminus, the 156-residue chain is ATP synthase subunit b (156 aa).

The helical transmembrane segment at 5–25 (LTLIGQAIAFAVFVWFCMKFV) threads the bilayer.

The protein belongs to the ATPase B chain family. F-type ATPases have 2 components, F(1) - the catalytic core - and F(0) - the membrane proton channel. F(1) has five subunits: alpha(3), beta(3), gamma(1), delta(1), epsilon(1). F(0) has three main subunits: a(1), b(2) and c(10-14). The alpha and beta chains form an alternating ring which encloses part of the gamma chain. F(1) is attached to F(0) by a central stalk formed by the gamma and epsilon chains, while a peripheral stalk is formed by the delta and b chains.

The protein resides in the cell inner membrane. Functionally, f(1)F(0) ATP synthase produces ATP from ADP in the presence of a proton or sodium gradient. F-type ATPases consist of two structural domains, F(1) containing the extramembraneous catalytic core and F(0) containing the membrane proton channel, linked together by a central stalk and a peripheral stalk. During catalysis, ATP synthesis in the catalytic domain of F(1) is coupled via a rotary mechanism of the central stalk subunits to proton translocation. In terms of biological role, component of the F(0) channel, it forms part of the peripheral stalk, linking F(1) to F(0). The protein is ATP synthase subunit b of Chromohalobacter salexigens (strain ATCC BAA-138 / DSM 3043 / CIP 106854 / NCIMB 13768 / 1H11).